The primary structure comprises 485 residues: MMVMNPLTATFLAALIGTAASASCGSSGIPFRFEVLPSGQPVLGCGSPTCFGAENGGRDLRHDSSFMAGADGDDGFFRDGDLARVRVRDPDAPAQMANCPREFSSSSCSNPMTWVGGFKASDNGDLSLQCCHYEGLRFAQEVGRPVVHPGEVYSGGEVLRDGRQTGFDAISNVRKITSGDGTVAYEVTVTRMNCLPNPGEESNEVSFDIQRDIGRILDKVGETAASGVQTNHIEADQRLSPSTDVQSDSYVSPTEADPQEPVEQFVQVGEQVVPVTSAGYYYPVASGVPACFTGNSKVMTPAGEKSMADLSVGDMVMTYEYGKMTYTRVASWLHRLPDTKAAFIKLTTEQGAIIDMTPQHFIYKANCVTEEMELVYAEDMTIGDCLMVKENEKLVMTTISEKSTFYETGVYAPMTETGDLIVDDVYASCHNVVKANTLSHTFLNFATSVQQKMRSVLGSLEETGHLPATSEFFLNIIDVLLPHKY.

The first 21 residues, 1–21, serve as a signal peptide directing secretion; the sequence is MMVMNPLTATFLAALIGTAAS. The segment at 236-258 is disordered; that stretch reads DQRLSPSTDVQSDSYVSPTEADP. Residues 239–252 show a composition bias toward polar residues; it reads LSPSTDVQSDSYVS.

Belongs to the hedgehog family. The C-terminal domain displays an autoproteolysis activity.

Its subcellular location is the secreted. It localises to the cell surface. The protein resides in the cell membrane. It is found in the extracellular space. Intercellular signal essential for a variety of patterning events during development. The protein is Warthog protein 1 (wrt-1) of Caenorhabditis elegans.